Reading from the N-terminus, the 215-residue chain is Glutathione S-transferase-like protein (215 aa).

The 76-residue stretch at 1-76 (MPNARILKIQ…YVAASGPAAP (76 aa)) folds into the GST N-terminal domain. The region spanning 82 to 215 (NVAEQAAVRQ…LVAVRKEASV (134 aa)) is the GST C-terminal domain.

Belongs to the GST superfamily.

This is Glutathione S-transferase-like protein from Aspergillus aculeatus (strain ATCC 16872 / CBS 172.66 / WB 5094).